Reading from the N-terminus, the 379-residue chain is Diaminopimelate decarboxylase (379 aa).

Lys-48 carries the post-translational modification N6-(pyridoxal phosphate)lysine. Residues Gly-214 and 242-245 each bind pyridoxal 5'-phosphate; that span reads EPGR. Residues Arg-245, Arg-280, and Tyr-284 each contribute to the substrate site. The active-site Proton donor is the Cys-309. The substrate site is built by Glu-310 and Tyr-338. Tyr-338 serves as a coordination point for pyridoxal 5'-phosphate.

It belongs to the Orn/Lys/Arg decarboxylase class-II family. LysA subfamily. In terms of assembly, homodimer. It depends on pyridoxal 5'-phosphate as a cofactor.

The catalysed reaction is meso-2,6-diaminopimelate + H(+) = L-lysine + CO2. It functions in the pathway amino-acid biosynthesis; L-lysine biosynthesis via DAP pathway; L-lysine from DL-2,6-diaminopimelate: step 1/1. Its function is as follows. Specifically catalyzes the decarboxylation of meso-diaminopimelate (meso-DAP) to L-lysine. The polypeptide is Diaminopimelate decarboxylase (Deinococcus radiodurans (strain ATCC 13939 / DSM 20539 / JCM 16871 / CCUG 27074 / LMG 4051 / NBRC 15346 / NCIMB 9279 / VKM B-1422 / R1)).